The primary structure comprises 201 residues: dTTP/UTP pyrophosphatase (201 aa).

The active-site Proton acceptor is the Asp75.

Belongs to the Maf family. YhdE subfamily. A divalent metal cation is required as a cofactor.

The protein resides in the cytoplasm. It carries out the reaction dTTP + H2O = dTMP + diphosphate + H(+). It catalyses the reaction UTP + H2O = UMP + diphosphate + H(+). Nucleoside triphosphate pyrophosphatase that hydrolyzes dTTP and UTP. May have a dual role in cell division arrest and in preventing the incorporation of modified nucleotides into cellular nucleic acids. The sequence is that of dTTP/UTP pyrophosphatase from Pseudomonas fluorescens (strain ATCC BAA-477 / NRRL B-23932 / Pf-5).